The primary structure comprises 506 residues: Cobyric acid synthase (506 aa).

The GATase cobBQ-type domain maps to 251–448; sequence DITIAIVQLP…LHGLFDSDAF (198 aa). Residue C332 is the Nucleophile of the active site. H440 is an active-site residue.

Belongs to the CobB/CobQ family. CobQ subfamily.

It participates in cofactor biosynthesis; adenosylcobalamin biosynthesis. Functionally, catalyzes amidations at positions B, D, E, and G on adenosylcobyrinic A,C-diamide. NH(2) groups are provided by glutamine, and one molecule of ATP is hydrogenolyzed for each amidation. This Salmonella choleraesuis (strain SC-B67) protein is Cobyric acid synthase.